A 751-amino-acid chain; its full sequence is Phosphoribosylformylglycinamidine synthase subunit PurL (751 aa).

His-54 is an active-site residue. 2 residues coordinate ATP: Tyr-57 and Lys-106. Position 108 (Glu-108) interacts with Mg(2+). Substrate-binding positions include 109–112 (SHNH) and Arg-131. His-110 functions as the Proton acceptor in the catalytic mechanism. Position 132 (Asp-132) interacts with Mg(2+). Gln-256 lines the substrate pocket. Asp-284 provides a ligand contact to Mg(2+). Residue 328–330 (ESQ) participates in substrate binding. ATP is bound by residues Asp-516 and Gly-553. Asn-554 contributes to the Mg(2+) binding site. Residue Ser-556 participates in substrate binding.

The protein belongs to the FGAMS family. As to quaternary structure, monomer. Part of the FGAM synthase complex composed of 1 PurL, 1 PurQ and 2 PurS subunits.

It localises to the cytoplasm. It carries out the reaction N(2)-formyl-N(1)-(5-phospho-beta-D-ribosyl)glycinamide + L-glutamine + ATP + H2O = 2-formamido-N(1)-(5-O-phospho-beta-D-ribosyl)acetamidine + L-glutamate + ADP + phosphate + H(+). It functions in the pathway purine metabolism; IMP biosynthesis via de novo pathway; 5-amino-1-(5-phospho-D-ribosyl)imidazole from N(2)-formyl-N(1)-(5-phospho-D-ribosyl)glycinamide: step 1/2. Its function is as follows. Part of the phosphoribosylformylglycinamidine synthase complex involved in the purines biosynthetic pathway. Catalyzes the ATP-dependent conversion of formylglycinamide ribonucleotide (FGAR) and glutamine to yield formylglycinamidine ribonucleotide (FGAM) and glutamate. The FGAM synthase complex is composed of three subunits. PurQ produces an ammonia molecule by converting glutamine to glutamate. PurL transfers the ammonia molecule to FGAR to form FGAM in an ATP-dependent manner. PurS interacts with PurQ and PurL and is thought to assist in the transfer of the ammonia molecule from PurQ to PurL. This is Phosphoribosylformylglycinamidine synthase subunit PurL from Nocardioides sp. (strain ATCC BAA-499 / JS614).